The sequence spans 195 residues: Segregation and condensation protein B (195 aa).

The protein belongs to the ScpB family. As to quaternary structure, homodimer. Homodimerization may be required to stabilize the binding of ScpA to the Smc head domains. Component of a cohesin-like complex composed of ScpA, ScpB and the Smc homodimer, in which ScpA and ScpB bind to the head domain of Smc. The presence of the three proteins is required for the association of the complex with DNA.

Its subcellular location is the cytoplasm. Functionally, participates in chromosomal partition during cell division. May act via the formation of a condensin-like complex containing Smc and ScpA that pull DNA away from mid-cell into both cell halves. The polypeptide is Segregation and condensation protein B (Clostridium perfringens (strain SM101 / Type A)).